The following is a 1496-amino-acid chain: Rap guanine nucleotide exchange factor 2 (1496 aa).

2 disordered regions span residues 40–59 (HVSS…SSSL) and 68–101 (SEAG…SDPL). A compositionally biased stretch (acidic residues) spans 83–94 (VDSEDDDDEEDI). 135 to 254 (AFANMTMSVR…VEEEGEIVMV (120 aa)) contributes to the a nucleoside 3',5'-cyclic phosphate binding site. An N-terminal Ras-GEF domain is found at 267 to 380 (KGHIVIKGTS…RLLNIACAAK (114 aa)). Positions 385 to 470 (LMTLTKPSRE…ITVKTNLFVF (86 aa)) constitute a PDZ domain. At Ser-501 the chain carries Phosphoserine. The Ras-associating domain occupies 606 to 692 (PDQVLRVFKA…GRYYLKNNME (87 aa)). At Thr-644 the chain carries Phosphothreonine; by PLK2. The Ras-GEF domain maps to 717-944 (STVEVATQLS…SQGSANATVL (228 aa)). Ser-806 carries the post-translational modification Phosphoserine; by PLK2. Residue Ser-930 is modified to Phosphoserine. Phosphoserine; by PLK2 occurs at positions 933 and 1022. A disordered region spans residues 1002 to 1051 (PATSTLPKNPGDKKPVKSETSPVAPRAGPQQKVQPQQPLAQPQPPHKVSQ). The segment covering 1030-1041 (PQQKVQPQQPLA) has biased composition (low complexity). Phosphoserine is present on residues Ser-1079, Ser-1088, Ser-1094, Ser-1115, Ser-1119, and Ser-1158. Positions 1093 to 1159 (GSLERHRKQA…RSSIVSNSSF (67 aa)) are disordered. 2 stretches are compositionally biased toward low complexity: residues 1110–1124 (SSQL…QSSP) and 1140–1159 (SDSG…NSSF). The residue at position 1175 (Ser-1175) is a Phosphoserine; by PLK2. Disordered regions lie at residues 1224–1256 (STEE…SGSH), 1303–1369 (STKY…EEAK), and 1390–1496 (RKEG…VSAV). A compositionally biased stretch (basic and acidic residues) spans 1227–1237 (ELSHDQGDRAS). Composition is skewed to polar residues over residues 1246–1256 (GSWTSCSSGSH) and 1306–1330 (YNRQ…SSTG). The span at 1440-1455 (PTEAPAPGQTPPAAAA) shows a compositional bias: low complexity. Residues 1485–1496 (AEEDEDEQVSAV) show a composition bias toward acidic residues.

This sequence belongs to the RAPGEF2 family. In terms of assembly, found in a complex, at least composed of KIDINS220, MAGI2, NTRK1 and RAPGEF2; the complex is mainly formed at late endosomes in a neuronal growth factor (NGF)-dependent manner. Interacts (via C-terminal domain) with NEDD4 (via WW domains); this interaction leads to ubiquitination and degradation via the proteasome pathway in a cAMP-independent manner. Interacts with MAGI1 (via PDZ domain). Interacts with ADRB1 (via C-terminal PDZ motif); the interaction is direct. Interacts (via Ras-associating domain) with RAP1A (via GTP-bound active form). Interacts weakly with HRAS (via GDP- and GTP-bound forms). Interacts (via C-terminal domain) with MAGI2 (via PDZ and WW domains). Interacts with CDH1, CTNNB1 and TJP1. In terms of processing, ubiquitinated by NEDD4, leading to proteasomal degradation. Phosphorylation by PLK2 promotes its activity. Expressed in all layers of the cerebral cortex, hippocampus and cerebellum. Expressed in the cortical plate, cingulate cortex and the subventricular zone. Expressed in neurons and endocrine cells (at protein level). Expressed in melanoma cells.

The protein localises to the cytoplasm. The protein resides in the perinuclear region. It is found in the cell membrane. Its subcellular location is the late endosome. It localises to the cell junction. In terms of biological role, functions as a guanine nucleotide exchange factor (GEF), which activates Rap and Ras family of small GTPases by exchanging bound GDP for free GTP in a cAMP-dependent manner. Serves as a link between cell surface receptors and Rap/Ras GTPases in intracellular signaling cascades. Also acts as an effector for Rap1 by direct association with Rap1-GTP thereby leading to the amplification of Rap1-mediated signaling. Shows weak activity on HRAS. It is controversial whether RAPGEF2 binds cAMP and cGMP or not. Its binding to ligand-activated beta-1 adrenergic receptor ADRB1 leads to the Ras activation through the G(s)-alpha signaling pathway. Involved in the cAMP-induced Ras and Erk1/2 signaling pathway that leads to sustained inhibition of long term melanogenesis by reducing dendrite extension and melanin synthesis. Also provides inhibitory signals for cell proliferation of melanoma cells and promotes their apoptosis in a cAMP-independent nanner. Regulates cAMP-induced neuritogenesis by mediating the Rap1/B-Raf/ERK signaling through a pathway that is independent on both PKA and RAPGEF3/RAPGEF4. Involved in neuron migration and in the formation of the major forebrain fiber connections forming the corpus callosum, the anterior commissure and the hippocampal commissure during brain development. Involved in neuronal growth factor (NGF)-induced sustained activation of Rap1 at late endosomes and in brain-derived neurotrophic factor (BDNF)-induced axon outgrowth of hippocampal neurons. Plays a role in the regulation of embryonic blood vessel formation and in the establishment of basal junction integrity and endothelial barrier function. May be involved in the regulation of the vascular endothelial growth factor receptor KDR and cadherin CDH5 expression at allantois endothelial cell-cell junctions. In Mus musculus (Mouse), this protein is Rap guanine nucleotide exchange factor 2 (Rapgef2).